We begin with the raw amino-acid sequence, 187 residues long: Ribosome maturation factor RimM (187 aa).

The 75-residue stretch at Asp94 to Leu168 folds into the PRC barrel domain. Positions Gly167–Asp187 are disordered.

This sequence belongs to the RimM family. In terms of assembly, binds ribosomal protein uS19.

Its subcellular location is the cytoplasm. Its function is as follows. An accessory protein needed during the final step in the assembly of 30S ribosomal subunit, possibly for assembly of the head region. Essential for efficient processing of 16S rRNA. May be needed both before and after RbfA during the maturation of 16S rRNA. It has affinity for free ribosomal 30S subunits but not for 70S ribosomes. The protein is Ribosome maturation factor RimM of Jannaschia sp. (strain CCS1).